The primary structure comprises 169 residues: Putative phosphoesterase SSP1770 (169 aa).

The active-site Proton donor is H34. 2 short sequence motifs (HXTX) span residues 34–37 (HITI) and 115–118 (HFTI). The active-site Proton acceptor is the H115.

The protein belongs to the 2H phosphoesterase superfamily. YjcG family.

This chain is Putative phosphoesterase SSP1770, found in Staphylococcus saprophyticus subsp. saprophyticus (strain ATCC 15305 / DSM 20229 / NCIMB 8711 / NCTC 7292 / S-41).